A 172-amino-acid polypeptide reads, in one-letter code: Large ribosomal subunit protein bL17 (172 aa).

A compositionally biased stretch (basic and acidic residues) spans 140 to 160; sequence LKAEAKAKREEKKPAKKEEKP. The interval 140–172 is disordered; the sequence is LKAEAKAKREEKKPAKKEEKPKKAKKEKAAASN.

This sequence belongs to the bacterial ribosomal protein bL17 family. Part of the 50S ribosomal subunit. Contacts protein L32.

The protein is Large ribosomal subunit protein bL17 of Leptospira biflexa serovar Patoc (strain Patoc 1 / Ames).